The sequence spans 764 residues: MVKSAVLGFPRIGKNRELKKATEAYWSGKTSAEELLATAKQLRLEHWKLQKAQGVDIIPSNDFSLYDQIMDHSFSFNVIPPRYRLSGLSSLDTYFAMGRGMQRAATADKAAVDVPAGEMVKWFDSNYHFLRPEVSEETDFKLSSTKALDEFLEAKEAGIITRPVLVGPVTYLFIAKAAKGSSIKPIELLPKLLPVYVELIKKLTEAGAEYIQIDEPILTLDLPQEILASYKEAYETLGKIGKLILTTYFGSLQSNADVLKGLPIAGVHVDVVRAPENLDRALAVLGENQIISVGVVSGRNIWKTDFQKATAIIEKAISAVGSERVQVASSSSILHIPHSLSGEDQINPEIKRWFAFAVEKCAELAILTKAANDGPASVRAELEANAADCKARAESPITNVEAVRERQSKVTPQMHERKSPFETRYAKQQASLKLPLFPTTTIGSFPQTKEIRVTRNRFAKGLISQEEYDAFIRKEISDVVKFQEEVGLDVLVHGEPERNDMVQYFGERMEGFVFTVNGWVQSYGSRCVRPPIIVGDVYRPAPMTVKESQYAQSITSKPMKGMLTAPITILRWSFPRDDVHDSVQAQQIALGLRDEVLDLEKAGIKVIQCDEPALREGLPLRRAEWDEYLKWAIDAFRLATAAVQDDTQIHSHFCYSDFNDIFDAIQRLDADVVSIENSKSDMKLLNVLSRYTSCIGPGLFDIHSPRVPPVSEFKERIDAIVKHVPKDHLWLNPDCGLKTRGWPETTADLKNMIAAAREAREQYA.

5-methyltetrahydropteroyltri-L-glutamate is bound by residues K19 and N126. S182 bears the Phosphoserine mark. A Phosphothreonine modification is found at T441. Residues 442–444 and E495 contribute to the L-homocysteine site; that span reads IGS. Residues 442–444 and E495 each bind L-methionine; that span reads IGS. Residues D500, Y523, 526–527, and W572 contribute to the 5-methyltetrahydropteroyltri-L-glutamate site; that span reads RC. D610 contributes to the L-homocysteine binding site. D610 contacts L-methionine. 3 residues coordinate Zn(2+): H652, C654, and E676. Catalysis depends on H703, which acts as the Proton donor. C735 contributes to the Zn(2+) binding site.

It belongs to the vitamin-B12 independent methionine synthase family. Requires Zn(2+) as cofactor.

The protein resides in the nucleus. Its subcellular location is the cytoplasm. The enzyme catalyses 5-methyltetrahydropteroyltri-L-glutamate + L-homocysteine = tetrahydropteroyltri-L-glutamate + L-methionine. The protein operates within amino-acid biosynthesis; L-methionine biosynthesis via de novo pathway; L-methionine from L-homocysteine (MetE route): step 1/1. Its function is as follows. Catalyzes the transfer of a methyl group from 5-methyltetrahydrofolate to homocysteine resulting in methionine formation. This chain is Probable 5-methyltetrahydropteroyltriglutamate--homocysteine methyltransferase (met26), found in Schizosaccharomyces pombe (strain 972 / ATCC 24843) (Fission yeast).